We begin with the raw amino-acid sequence, 351 residues long: Rod outer segment membrane protein 1 (351 aa).

The Cytoplasmic portion of the chain corresponds to 1-19; it reads MAPVLPLVLPLQPRIRLAQ. A helical transmembrane segment spans residues 20–44; that stretch reads GLWLLSWLLALAGGVILLCSGHLLV. Over 45–64 the chain is Lumenal; that stretch reads QLRHLGTFLAPSCQFPVLPQ. The helical transmembrane segment at 65–84 threads the bilayer; sequence AALAAGAVALGTGLVGVGAS. The Cytoplasmic segment spans residues 85–102; it reads RASLNAALYPPWRGVLGP. A helical membrane pass occupies residues 103 to 125; it reads LLVAGTAGGGGLLVVGLGLALAL. Over 126–263 the chain is Lumenal; it reads PGSLDEALEE…HEVLLEHLQD (138 aa). The chain crosses the membrane as a helical span at residues 264–286; sequence LAGTLGSMLAVTFLLQALVLLGL. Residues 287-351 lie on the Cytoplasmic side of the membrane; that stretch reads RYLQTALEGL…APPKEDLSEA (65 aa). The interval 331-351 is disordered; sequence RPAPEEAPPGEAPPKEDLSEA.

This sequence belongs to the PRPH2/ROM1 family. As to quaternary structure, homodimer; disulfide-linked. Forms a homotetramer. Forms a heterotetramer with PRPH2. Homotetramer and heterotetramer core complexes go on to form higher order complexes by formation of intermolecular disulfide bonds. Interacts with STX3. Interacts with SNAP25. In terms of tissue distribution, retina photoreceptors (at protein level). In rim region of ROS disks.

The protein resides in the photoreceptor inner segment membrane. Its subcellular location is the photoreceptor outer segment membrane. Functionally, plays a role in rod outer segment (ROS) morphogenesis. May play a role with PRPH2 in the maintenance of the structure of ROS curved disks. Plays a role in the organization of the ROS and maintenance of ROS disk diameter. Involved in the maintenance of the retina outer nuclear layer. The sequence is that of Rod outer segment membrane protein 1 (ROM1) from Homo sapiens (Human).